Reading from the N-terminus, the 147-residue chain is Orcokinin peptides (147 aa).

The first 27 residues, 1-27 (MPRHSVFALSILALSITATVWIPTVQA), serve as a signal peptide directing secretion. 2 propeptides span residues 28-89 (ETNL…ERFG) and 146-147 (FG).

The protein belongs to the orcokinin family.

It localises to the secreted. Its function is as follows. Myotropic peptides. This Apis mellifera (Honeybee) protein is Orcokinin peptides.